The primary structure comprises 61 residues: Metallothionein-2 (61 aa).

Position 1 is an N-acetylmethionine (M1). Residues 1-29 are beta; that stretch reads MDPNCSCATDGSCSCAGSCKCKECKCTTC. A divalent metal cation is bound by residues C5, C7, C13, C15, C19, C21, C24, C26, C29, C33, C34, C36, C37, C41, C44, C48, C50, and C57. An alpha region spans residues 30–61; the sequence is KKSCCSCCPVGCAKCSQGCVCKEASDKCSCCA. S58 bears the Phosphoserine mark. A divalent metal cation contacts are provided by C59 and C60.

Belongs to the metallothionein superfamily. Type 1 family.

Its function is as follows. Metallothioneins have a high content of cysteine residues that bind various heavy metals; these proteins are transcriptionally regulated by both heavy metals and glucocorticoids. This Cricetulus griseus (Chinese hamster) protein is Metallothionein-2 (MT2).